A 476-amino-acid chain; its full sequence is Bifunctional protein GlmU (476 aa).

The tract at residues 1 to 232 is pyrophosphorylase; the sequence is MDNLAAIILA…PVEVMGINDR (232 aa). UDP-N-acetyl-alpha-D-glucosamine-binding positions include 9-12, K23, Q75, and 80-81; these read LAAG and GT. D105 is a Mg(2+) binding site. 4 residues coordinate UDP-N-acetyl-alpha-D-glucosamine: G142, E157, N172, and N230. A Mg(2+)-binding site is contributed by N230. The segment at 233–253 is linker; it reads VQLAEAARHARRRIAEEHMLN. The tract at residues 254–476 is N-acetyltransferase; the sequence is GVTLVDPAAT…EGWKLRKRDQ (223 aa). 2 residues coordinate UDP-N-acetyl-alpha-D-glucosamine: R353 and K371. The Proton acceptor role is filled by H383. Positions 386 and 397 each coordinate UDP-N-acetyl-alpha-D-glucosamine. Residues 406–407, S425, A443, and R460 contribute to the acetyl-CoA site; that span reads NY.

This sequence in the N-terminal section; belongs to the N-acetylglucosamine-1-phosphate uridyltransferase family. It in the C-terminal section; belongs to the transferase hexapeptide repeat family. In terms of assembly, homotrimer. Mg(2+) is required as a cofactor.

It is found in the cytoplasm. The enzyme catalyses alpha-D-glucosamine 1-phosphate + acetyl-CoA = N-acetyl-alpha-D-glucosamine 1-phosphate + CoA + H(+). The catalysed reaction is N-acetyl-alpha-D-glucosamine 1-phosphate + UTP + H(+) = UDP-N-acetyl-alpha-D-glucosamine + diphosphate. It participates in nucleotide-sugar biosynthesis; UDP-N-acetyl-alpha-D-glucosamine biosynthesis; N-acetyl-alpha-D-glucosamine 1-phosphate from alpha-D-glucosamine 6-phosphate (route II): step 2/2. Its pathway is nucleotide-sugar biosynthesis; UDP-N-acetyl-alpha-D-glucosamine biosynthesis; UDP-N-acetyl-alpha-D-glucosamine from N-acetyl-alpha-D-glucosamine 1-phosphate: step 1/1. It functions in the pathway bacterial outer membrane biogenesis; LPS lipid A biosynthesis. Functionally, catalyzes the last two sequential reactions in the de novo biosynthetic pathway for UDP-N-acetylglucosamine (UDP-GlcNAc). The C-terminal domain catalyzes the transfer of acetyl group from acetyl coenzyme A to glucosamine-1-phosphate (GlcN-1-P) to produce N-acetylglucosamine-1-phosphate (GlcNAc-1-P), which is converted into UDP-GlcNAc by the transfer of uridine 5-monophosphate (from uridine 5-triphosphate), a reaction catalyzed by the N-terminal domain. This is Bifunctional protein GlmU from Geobacter sulfurreducens (strain ATCC 51573 / DSM 12127 / PCA).